Reading from the N-terminus, the 234-residue chain is Uridylate kinase (234 aa).

9–10 (GS) contacts ATP. G43 contributes to the UMP binding site. The ATP site is built by G44 and R48. UMP contacts are provided by residues D65 and 113-119 (VIPGQTT). Residues T139, Y145, and D148 each contribute to the ATP site.

Belongs to the UMP kinase family. Homohexamer.

It is found in the cytoplasm. It carries out the reaction UMP + ATP = UDP + ADP. It functions in the pathway pyrimidine metabolism; CTP biosynthesis via de novo pathway; UDP from UMP (UMPK route): step 1/1. Its activity is regulated as follows. Inhibited by UTP. Functionally, catalyzes the reversible phosphorylation of UMP to UDP. The sequence is that of Uridylate kinase from Methanococcoides burtonii (strain DSM 6242 / NBRC 107633 / OCM 468 / ACE-M).